The sequence spans 236 residues: Uridylate kinase (236 aa).

8–11 contributes to the ATP binding site; that stretch reads KLSG. Gly51 contributes to the UMP binding site. Residues Gly52 and Arg56 each coordinate ATP. UMP contacts are provided by residues Asp71 and 133-140; that span reads TGRPFFTT. The ATP site is built by Asn161, Phe167, and Asp170.

This sequence belongs to the UMP kinase family. Homohexamer.

The protein resides in the cytoplasm. It carries out the reaction UMP + ATP = UDP + ADP. It functions in the pathway pyrimidine metabolism; CTP biosynthesis via de novo pathway; UDP from UMP (UMPK route): step 1/1. Its activity is regulated as follows. Inhibited by UTP. In terms of biological role, catalyzes the reversible phosphorylation of UMP to UDP. In Mesomycoplasma hyopneumoniae (strain 232) (Mycoplasma hyopneumoniae), this protein is Uridylate kinase.